Reading from the N-terminus, the 604-residue chain is NADPH oxidase activator (604 aa).

TPR repeat units follow at residues 36 to 69 (SKIN…DKYL) and 71 to 103 (SSYY…LRGH). Disordered stretches follow at residues 180-298 (FKPP…KLPS) and 383-581 (DIIP…PYQV). Composition is skewed to low complexity over residues 194–215 (SATT…SPPS) and 225–243 (PSSS…SSSP). Residues 244–260 (KLPPTPKPSFGSSPPPS) are compositionally biased toward pro residues. Residues 261–284 (SSSSSSSSSSSSSSSISPLTNKTL) are compositionally biased toward low complexity. The 76-residue stretch at 309–384 (KITLKVFYKD…EINEINVKDI (76 aa)) folds into the PB1 domain. Composition is skewed to low complexity over residues 396–424 (PDKT…SSSS), 435–453 (PKTT…TTST), and 467–483 (FGST…SSSS). Polar residues predominate over residues 502 to 528 (LLKQQNQTQSINIPPKVPTSSRPKMTQ). Low complexity predominate over residues 529–570 (SHSPPSSSPLSSYSTSFQSVSSPSLSSSYNGSTSSYGGFSSS). Positions 573–604 (PPTPYPYQVLYTDSNEKYYLNTETNETFWELP) constitute a WW domain.

Its function is as follows. May function as an activator of NOX1, a superoxide-producing NADPH oxidase. The chain is NADPH oxidase activator (ncfA) from Dictyostelium discoideum (Social amoeba).